Reading from the N-terminus, the 196-residue chain is GTP cyclohydrolase 1 (196 aa).

Residues cysteine 86, histidine 89, and cysteine 157 each coordinate Zn(2+).

Belongs to the GTP cyclohydrolase I family. In terms of assembly, toroid-shaped homodecamer, composed of two pentamers of five dimers.

It carries out the reaction GTP + H2O = 7,8-dihydroneopterin 3'-triphosphate + formate + H(+). Its pathway is cofactor biosynthesis; 7,8-dihydroneopterin triphosphate biosynthesis; 7,8-dihydroneopterin triphosphate from GTP: step 1/1. In Parabacteroides distasonis (strain ATCC 8503 / DSM 20701 / CIP 104284 / JCM 5825 / NCTC 11152), this protein is GTP cyclohydrolase 1.